A 261-amino-acid chain; its full sequence is tRNA pseudouridine synthase A (261 aa).

Aspartate 51 serves as the catalytic Nucleophile. Tyrosine 109 provides a ligand contact to substrate.

It belongs to the tRNA pseudouridine synthase TruA family. In terms of assembly, homodimer.

The catalysed reaction is uridine(38/39/40) in tRNA = pseudouridine(38/39/40) in tRNA. Its function is as follows. Formation of pseudouridine at positions 38, 39 and 40 in the anticodon stem and loop of transfer RNAs. The chain is tRNA pseudouridine synthase A from Shewanella halifaxensis (strain HAW-EB4).